The chain runs to 236 residues: MRLAVNIDHIATLRNARGEQEPDPVAAALLAEKCGAAGIVCHLREDRRHINDHDLARLREAVTTKLDLEMAMTPELQQIALKTRPELITLVPEKREELTTEGGFDIVRHYAVLAAYLKPFNAAGIEVSLFIEPEKKAIDLAKQAGADLVELHTGLYALKKEGEAQSKELQRIREAAIHARSLGLKVVAGHGLNYLNIAPFREIEEIEEVSIGHAIIARAVLTGLEEAIREMLRIIK.

Position 6 (asparagine 6) interacts with 3-amino-2-oxopropyl phosphate. Residue 8-9 (DH) participates in 1-deoxy-D-xylulose 5-phosphate binding. Arginine 17 is a 3-amino-2-oxopropyl phosphate binding site. Histidine 42 serves as the catalytic Proton acceptor. 1-deoxy-D-xylulose 5-phosphate-binding residues include arginine 44 and histidine 49. Glutamate 69 acts as the Proton acceptor in catalysis. Residue threonine 99 participates in 1-deoxy-D-xylulose 5-phosphate binding. Catalysis depends on histidine 190, which acts as the Proton donor. 3-amino-2-oxopropyl phosphate is bound by residues glycine 191 and 212-213 (GH).

Belongs to the PNP synthase family. As to quaternary structure, homooctamer; tetramer of dimers.

The protein resides in the cytoplasm. The catalysed reaction is 3-amino-2-oxopropyl phosphate + 1-deoxy-D-xylulose 5-phosphate = pyridoxine 5'-phosphate + phosphate + 2 H2O + H(+). It functions in the pathway cofactor biosynthesis; pyridoxine 5'-phosphate biosynthesis; pyridoxine 5'-phosphate from D-erythrose 4-phosphate: step 5/5. Its function is as follows. Catalyzes the complicated ring closure reaction between the two acyclic compounds 1-deoxy-D-xylulose-5-phosphate (DXP) and 3-amino-2-oxopropyl phosphate (1-amino-acetone-3-phosphate or AAP) to form pyridoxine 5'-phosphate (PNP) and inorganic phosphate. This is Pyridoxine 5'-phosphate synthase from Pelodictyon phaeoclathratiforme (strain DSM 5477 / BU-1).